A 237-amino-acid polypeptide reads, in one-letter code: Maternal B9.10 protein (237 aa).

The protein belongs to the BTG family.

This Xenopus laevis (African clawed frog) protein is Maternal B9.10 protein.